The sequence spans 960 residues: Pentatricopeptide repeat-containing protein At3g63370, chloroplastic (960 aa).

The N-terminal 64 residues, 1–64, are a transit peptide targeting the chloroplast; that stretch reads MEYAVTNMRL…PKLACFDGVL (64 aa). 20 PPR repeats span residues 79–109, 115–145, 146–180, 181–215, 216–246, 248–282, 283–317, 319–349, 350–384, 385–419, 420–450, 451–485, 486–516, 520–550, 551–585, 586–620, 621–651, 652–686, 687–717, and 723–753; these read PVEAFAYVLELCGKRRAVSQGRQLHSRIFKT, LDFLAGKLVFMYGKCGSLDDAEKVFDEMPDR, TAFAWNTMIGAYVSNGEPASALALYWNMRVEGVPL, GLSSFPALLKACAKLRDIRSGSELHSLLVKLGYHS, TGFIVNALVSMYAKNDDLSAARRLFDGFQEK, DAVLWNSILSSYSTSGKSLETLELFREMHMTGPAP, NSYTIVSALTACDGFSYAKLGKEIHASVLKSSTHS, ELYVCNALIAMYTRCGKMPQAERILRQMNNA, DVVTWNSLIKGYVQNLMYKEALEFFSDMIAAGHKS, DEVSMTSIIAASGRLSNLLAGMELHAYVIKHGWDS, NLQVGNTLIDMYSKCNLTCYMGRAFLRMHDK, DLISWTTVIAGYAQNDCHVEALELFRDVAKKRMEI, DEMILGSILRASSVLKSMLIVKEIHCHILRK, DTVIQNELVDVYGKCRNMGYATRVFESIKGK, DVVSWTSMISSSALNGNESEAVELFRRMVETGLSA, DSVALLCILSAAASLSALNKGREIHCYLLRKGFCL, EGSIAVAVVDMYACCGDLQSAKAVFDRIERK, GLLQYTSMINAYGMHGCGKAAVELFDKMRHENVSP, DHISFLALLYACSHAGLLDEGRGFLKIMEHE, and WPEHYVCLVDMLGRANCVVEAFEFVKMMKTE. The tract at residues 758-833 is type E motif; sequence VWCALLAACR…HPGCSWIEMD (76 aa). The type E(+) motif stretch occupies residues 834–864; the sequence is GKVHKFTARDKSHPESKEIYEKLSEVTRKLE. Residues 865–960 form a type DYW motif region; sequence REVGYVADTK…SGLCSCGDSW (96 aa).

The protein belongs to the PPR family. PCMP-H subfamily.

It is found in the plastid. Its subcellular location is the chloroplast. In terms of biological role, involved in RNA editing event in chloroplasts. Required for the editing of a single site in rps14 transcript. In Arabidopsis thaliana (Mouse-ear cress), this protein is Pentatricopeptide repeat-containing protein At3g63370, chloroplastic (PCMP-H83).